The primary structure comprises 239 residues: Pyridoxine 5'-phosphate synthase (239 aa).

Residue Asn-7 participates in 3-amino-2-oxopropyl phosphate binding. A 1-deoxy-D-xylulose 5-phosphate-binding site is contributed by 9 to 10; it reads DH. A 3-amino-2-oxopropyl phosphate-binding site is contributed by Arg-18. His-43 (proton acceptor) is an active-site residue. 1-deoxy-D-xylulose 5-phosphate-binding residues include Arg-45 and His-50. Residue Glu-70 is the Proton acceptor of the active site. Residue Thr-100 coordinates 1-deoxy-D-xylulose 5-phosphate. His-191 functions as the Proton donor in the catalytic mechanism. 3-amino-2-oxopropyl phosphate-binding positions include Gly-192 and 213–214; that span reads GH.

The protein belongs to the PNP synthase family. Homooctamer; tetramer of dimers.

The protein localises to the cytoplasm. The catalysed reaction is 3-amino-2-oxopropyl phosphate + 1-deoxy-D-xylulose 5-phosphate = pyridoxine 5'-phosphate + phosphate + 2 H2O + H(+). The protein operates within cofactor biosynthesis; pyridoxine 5'-phosphate biosynthesis; pyridoxine 5'-phosphate from D-erythrose 4-phosphate: step 5/5. In terms of biological role, catalyzes the complicated ring closure reaction between the two acyclic compounds 1-deoxy-D-xylulose-5-phosphate (DXP) and 3-amino-2-oxopropyl phosphate (1-amino-acetone-3-phosphate or AAP) to form pyridoxine 5'-phosphate (PNP) and inorganic phosphate. This chain is Pyridoxine 5'-phosphate synthase, found in Citrifermentans bemidjiense (strain ATCC BAA-1014 / DSM 16622 / JCM 12645 / Bem) (Geobacter bemidjiensis).